Consider the following 623-residue polypeptide: Keratin, type I cytoskeletal 9 (623 aa).

The segment covering 1-13 (MSCRQFSSSYLSR) has biased composition (low complexity). The tract at residues 1-25 (MSCRQFSSSYLSRSGGGGGGGLGSG) is disordered. The head stretch occupies residues 1–152 (MSCRQFSSSY…GGDGGILTAN (152 aa)). Phosphoserine occurs at positions 14 and 57. Residues 14–25 (SGGGGGGGLGSG) show a composition bias toward gly residues. Residues 153–188 (EKSTMQELNSRLASYLDKVQALEEANNDLENKIQDW) form a coil 1A region. Residues 153–465 (EKSTMQELNS…NLLEGGQEDF (313 aa)) form the IF rod domain. Positions 189–207 (YDKKGPAAIQKNYSPYYNT) are linker 1. Residues 208–299 (IDDLKDQIVD…KNHKEEMSQL (92 aa)) are coil 1B. A linker 12 region spans residues 300–322 (TGQNSGDVNVEINVAPGKDLTKT). Positions 323–461 (LNDMRQEYEQ…ETYHNLLEGG (139 aa)) are coil 2. Disordered regions lie at residues 462-496 (QEDFESSGAGKIGLGGRGGSGGSYGRGSRGGSGGS) and 534-623 (YGGG…SSHS). The tail stretch occupies residues 462 to 623 (QEDFESSGAG…GGGSGKSSHS (162 aa)). The span at 471–496 (GKIGLGGRGGSGGSYGRGSRGGSGGS) shows a compositional bias: gly residues.

This sequence belongs to the intermediate filament family. As to quaternary structure, heterotetramer of two type I and two type II keratins. As to expression, expressed in the terminally differentiated epidermis of palms and soles.

Its function is as follows. May serve an important special function either in the mature palmar and plantar skin tissue or in the morphogenetic program of the formation of these tissues. Plays a role in keratin filament assembly. The polypeptide is Keratin, type I cytoskeletal 9 (KRT9) (Homo sapiens (Human)).